An 861-amino-acid polypeptide reads, in one-letter code: MNLKKTLLMPQTAFEMQGKLTTKEQQFQAFWQSKRIYQKLHRQNKDKPQKILHDGPPYANGNIHVGHALNKILKDFVLRSWNLQGFGTVFIPGWDCHGLPIEHAVSKKDPQHYASLSLSEKRDLCKQFALSQIAIQKAQFQRLGLLNDFSKYYKTIDESFQQNELDLFLQAVKKDLIFQALKPTYWSPVSRTSLAEAEIEYKEVKTIGLYLTFTVVQSAVLNSGTKLLVWTTTPWTLPTNQAIAVHPQFEYLLFTYNNEQYVVLASLFESLKTKFGWTDAIQVQTISGSQLQNTTYKHCLYDKVNPVLLGNHVLCNEGTGLVHTSPAYGLDDFYLCKQNKLNEALVSLDEKGVFNDTLNDPVLTGLFYLKANDVIIERLKQHHNFVFSESFLHREPHDWRSKTPVIYRASKQLFIKTKSIQSKLKRQIKRVKFVNNKNKERLQEMLLQRAEWCISRQRVWGLPIPLIYADNQPLLDVTTIKYTIQQLKKYGIDSWFEKDINFFLNPKKIQPGVEYKKETDTLEVWFDSGSTYNVLISNKLNFPADLYLEGSDQYRGWFNSSASCGIIQTDQLPFKSLISHGFTLDEHGNKMSKSLGNVVDPLKLCDQYGADILRLWVTNVDWQVDNRIGDNIIKQIVEQYRRIRNSLLRFILGNLNHFNFGEMKDYRFALEDKIVIHKTNALVQELHQWLKQYNFLNCLKAINKFVLWLSGWYFEIIKDTLYCDAKTNPNRVAKQAVLNYIFTQLIGFLNIFIPHTAEDAWQNYLLPKKPVSVNLFAGPAMFKVANVKGLDRLHESFSAIKDRAYAAIEQARQNGVITKNNQVVLTLGVDSTSAIDPTSCKTFSSLAKRKPGKYNEWPQRN.

The short motif at 57–67 is the 'HIGH' region element; it reads PYANGNIHVGH. Position 549 (Glu549) interacts with L-isoleucyl-5'-AMP. Residues 590–594 carry the 'KMSKS' region motif; it reads KMSKS. Residue Lys593 coordinates ATP.

The protein belongs to the class-I aminoacyl-tRNA synthetase family. IleS type 1 subfamily. In terms of assembly, monomer.

The protein localises to the cytoplasm. The catalysed reaction is tRNA(Ile) + L-isoleucine + ATP = L-isoleucyl-tRNA(Ile) + AMP + diphosphate. In terms of biological role, catalyzes the attachment of isoleucine to tRNA(Ile). As IleRS can inadvertently accommodate and process structurally similar amino acids such as valine, to avoid such errors it has two additional distinct tRNA(Ile)-dependent editing activities. One activity is designated as 'pretransfer' editing and involves the hydrolysis of activated Val-AMP. The other activity is designated 'posttransfer' editing and involves deacylation of mischarged Val-tRNA(Ile). This Mycoplasma pneumoniae (strain ATCC 29342 / M129 / Subtype 1) (Mycoplasmoides pneumoniae) protein is Isoleucine--tRNA ligase.